The chain runs to 549 residues: CDK5RAP3 protein homolog (549 aa).

3 short sequence motifs (shuffled ATG8-binding motif) span residues 274–277 (IDWD), 285–288 (IDWD), and 333–336 (ISWD).

This sequence belongs to the CDK5RAP3 family. As to quaternary structure, substrate adapter component of the UFM1 ribosome E3 ligase (UREL) complex. Interacts with ATG8 family proteins.

Its function is as follows. Substrate adapter of E3 ligase complexes mediating ufmylation, the covalent attachment of the ubiquitin-like modifier UFM1 to substrate proteins, and which is involved in various processes, such as ribosome recycling and reticulophagy (also called ER-phagy). This Arabidopsis thaliana (Mouse-ear cress) protein is CDK5RAP3 protein homolog.